A 406-amino-acid polypeptide reads, in one-letter code: Argininosuccinate synthase (406 aa).

8 to 16 (AYSGGLDTS) contributes to the ATP binding site. Residue Y86 coordinates L-citrulline. ATP is bound at residue G116. Residues T118, N122, and D123 each coordinate L-aspartate. N122 is a binding site for L-citrulline. The L-citrulline site is built by R126, S174, S183, E259, and Y271.

The protein belongs to the argininosuccinate synthase family. Type 1 subfamily. Homotetramer.

It localises to the cytoplasm. It carries out the reaction L-citrulline + L-aspartate + ATP = 2-(N(omega)-L-arginino)succinate + AMP + diphosphate + H(+). It functions in the pathway amino-acid biosynthesis; L-arginine biosynthesis; L-arginine from L-ornithine and carbamoyl phosphate: step 2/3. The polypeptide is Argininosuccinate synthase (Dehalococcoides mccartyi (strain ATCC BAA-2100 / JCM 16839 / KCTC 5957 / BAV1)).